The primary structure comprises 357 residues: Glycerol-3-phosphate dehydrogenase [NAD(P)+] (357 aa).

NADPH-binding residues include Ser-12, Trp-13, His-33, and Lys-115. The sn-glycerol 3-phosphate site is built by Lys-115, Gly-149, and Ser-151. Gly-153 lines the NADPH pocket. Lys-204, Asp-263, Arg-274, and Asn-275 together coordinate sn-glycerol 3-phosphate. Lys-204 serves as the catalytic Proton acceptor. Arg-274 is a binding site for NADPH. Leu-307 and Glu-309 together coordinate NADPH.

It belongs to the NAD-dependent glycerol-3-phosphate dehydrogenase family.

The protein resides in the cytoplasm. It catalyses the reaction sn-glycerol 3-phosphate + NAD(+) = dihydroxyacetone phosphate + NADH + H(+). The catalysed reaction is sn-glycerol 3-phosphate + NADP(+) = dihydroxyacetone phosphate + NADPH + H(+). Its pathway is membrane lipid metabolism; glycerophospholipid metabolism. In terms of biological role, catalyzes the reduction of the glycolytic intermediate dihydroxyacetone phosphate (DHAP) to sn-glycerol 3-phosphate (G3P), the key precursor for phospholipid synthesis. The chain is Glycerol-3-phosphate dehydrogenase [NAD(P)+] from Treponema denticola (strain ATCC 35405 / DSM 14222 / CIP 103919 / JCM 8153 / KCTC 15104).